The chain runs to 91 residues: Acylphosphatase (91 aa).

The 88-residue stretch at 3-90 (RVLIRVKGKV…EIYLDFSITQ (88 aa)) folds into the Acylphosphatase-like domain. Residues arginine 18 and asparagine 36 contribute to the active site.

This sequence belongs to the acylphosphatase family.

The enzyme catalyses an acyl phosphate + H2O = a carboxylate + phosphate + H(+). This Shewanella amazonensis (strain ATCC BAA-1098 / SB2B) protein is Acylphosphatase (acyP).